The sequence spans 192 residues: Thymidine kinase (192 aa).

Residues 9-16 (GAMNSGKS) and 85-88 (DEVQ) each bind ATP. Glu86 serves as the catalytic Proton acceptor. Residues Cys143, Cys146, Cys181, and Cys184 each contribute to the Zn(2+) site.

The protein belongs to the thymidine kinase family. As to quaternary structure, homotetramer.

It is found in the cytoplasm. It catalyses the reaction thymidine + ATP = dTMP + ADP + H(+). This is Thymidine kinase from Shouchella clausii (strain KSM-K16) (Alkalihalobacillus clausii).